Here is a 287-residue protein sequence, read N- to C-terminus: Nucleotide-binding protein Ppro_0977 (287 aa).

Residue 8–15 (GMSGSGKS) coordinates ATP. 59-62 (DIRG) is a binding site for GTP.

This sequence belongs to the RapZ-like family.

Displays ATPase and GTPase activities. The polypeptide is Nucleotide-binding protein Ppro_0977 (Pelobacter propionicus (strain DSM 2379 / NBRC 103807 / OttBd1)).